The following is a 642-amino-acid chain: Influenza virus NS1A-binding protein homolog (642 aa).

In terms of domain architecture, BTB spans 32 to 99; it reads CDVRLQVCGH…AYTAQLKADK (68 aa). Positions 134-233 constitute a BACK domain; that stretch reads CISYRNFASC…YYSADHKLLD (100 aa). Phosphoserine occurs at positions 246, 277, 322, 336, and 338. Residues 257–281 are disordered; that stretch reads KPPRENGHKQISGSSTGCLSSPNAS. Positions 265-281 are enriched in polar residues; the sequence is KQISGSSTGCLSSPNAS. Kelch repeat units follow at residues 369–415, 416–463, 465–512, 513–559, 561–606, and 608–642; these read KLIA…VLMG, QLYV…ALNG, LYIV…ELGG, YLYI…VLDG, LFVG…TVGN, and IYAV…IFQF.

Belongs to the BTB-kelch protein family. In terms of assembly, homodimer; through the BTB domain. Interacts with AHR/Aryl hydrocarbon receptor. Interacts (via BACK domain) with pre-mRNA-binding protein HNRNPK; the interaction is direct. Interacts (via BACK domain) with splicing factor PTBP1; the interaction is direct. Interacts (via Kelch repeats) with RNA polymerase POLR2A (via C-terminal domain). Interacts (via BACK domain) with splicing factor SNRPA; the interaction is indirect. Interacts (via Kelch repeats) with splicing factor SART1. Interacts (via BACK domain) with ALYREF; the interaction is indirect and likely plays a role in mRNA nuclear export. Interacts (via Kelch repeats) with KLHL20 (via Kelch repeats); this interaction blocks the assembly of Cul3-KLHL20 complex. Ubiquitous expression. In the heart, the highest expression is detected in the ventricles and the lowest in the atria. Expressed in dendrites and spines in neurons.

The protein localises to the cytoplasm. It localises to the cytoskeleton. The protein resides in the nucleus. In terms of biological role, involved in many cell functions, including pre-mRNA splicing, the aryl hydrocarbon receptor (AHR) pathway, F-actin organization and protein ubiquitination. Plays a role in the dynamic organization of the actin skeleton as a stabilizer of actin filaments by association with F-actin through Kelch repeats. Protects cells from cell death induced by actin destabilization. Functions as a modifier of the AHR/Aryl hydrocarbon receptor pathway increasing the concentration of AHR available to activate transcription. In addition, functions as a negative regulator of BCR(KLHL20) E3 ubiquitin ligase complex to prevent ubiquitin-mediated proteolysis of PML and DAPK1, two tumor suppressors. Inhibits pre-mRNA splicing (in vitro). May play a role in mRNA nuclear export. Its function is as follows. May play a role in cell cycle progression in the nucleus. The protein is Influenza virus NS1A-binding protein homolog of Mus musculus (Mouse).